The chain runs to 208 residues: Uracil phosphoribosyltransferase (208 aa).

5-phospho-alpha-D-ribose 1-diphosphate is bound by residues arginine 78, arginine 103, and 130–138; that span reads DPMLATGGS. Residues isoleucine 193 and 198 to 200 each bind uracil; that span reads GDA. Aspartate 199 contributes to the 5-phospho-alpha-D-ribose 1-diphosphate binding site.

The protein belongs to the UPRTase family. It depends on Mg(2+) as a cofactor.

It catalyses the reaction UMP + diphosphate = 5-phospho-alpha-D-ribose 1-diphosphate + uracil. Its pathway is pyrimidine metabolism; UMP biosynthesis via salvage pathway; UMP from uracil: step 1/1. Its activity is regulated as follows. Allosterically activated by GTP. Its function is as follows. Catalyzes the conversion of uracil and 5-phospho-alpha-D-ribose 1-diphosphate (PRPP) to UMP and diphosphate. This chain is Uracil phosphoribosyltransferase, found in Shewanella baltica (strain OS223).